Reading from the N-terminus, the 312-residue chain is GTP cyclohydrolase MptA (312 aa).

It belongs to the GTP cyclohydrolase IV family. As to quaternary structure, homodimer. Fe(2+) is required as a cofactor.

It carries out the reaction GTP + H2O = 7,8-dihydroneopterin 2',3'-cyclic phosphate + formate + diphosphate + H(+). It participates in cofactor biosynthesis; 5,6,7,8-tetrahydromethanopterin biosynthesis. Converts GTP to 7,8-dihydro-D-neopterin 2',3'-cyclic phosphate, the first intermediate in the biosynthesis of coenzyme methanopterin. The chain is GTP cyclohydrolase MptA from Methanococcus vannielii (strain ATCC 35089 / DSM 1224 / JCM 13029 / OCM 148 / SB).